Reading from the N-terminus, the 245-residue chain is Ribonuclease PH (245 aa).

Phosphate is bound by residues arginine 93 and 131–133 (GTR).

The protein belongs to the RNase PH family. In terms of assembly, homohexameric ring arranged as a trimer of dimers.

The catalysed reaction is tRNA(n+1) + phosphate = tRNA(n) + a ribonucleoside 5'-diphosphate. Functionally, phosphorolytic 3'-5' exoribonuclease that plays an important role in tRNA 3'-end maturation. Removes nucleotide residues following the 3'-CCA terminus of tRNAs; can also add nucleotides to the ends of RNA molecules by using nucleoside diphosphates as substrates, but this may not be physiologically important. Probably plays a role in initiation of 16S rRNA degradation (leading to ribosome degradation) during starvation. In Corynebacterium glutamicum (strain ATCC 13032 / DSM 20300 / JCM 1318 / BCRC 11384 / CCUG 27702 / LMG 3730 / NBRC 12168 / NCIMB 10025 / NRRL B-2784 / 534), this protein is Ribonuclease PH.